Reading from the N-terminus, the 122-residue chain is Serum amyloid A-3 protein (122 aa).

The signal sequence occupies residues 1–18 (MKPFLAIIFCFLILGVDS). The tract at residues 100–122 (ANKWGRSGKDPNHFRPAGLPSKY) is disordered.

This sequence belongs to the SAA family. Expressed by the liver; secreted in plasma.

The protein localises to the secreted. Major acute phase reactant. Apolipoprotein of the HDL complex. In vitro exhibits antimicrobial activity against Escherichia coli, Streptococcus uberis and Pseudomonas aeruginosa. This Mesocricetus auratus (Golden hamster) protein is Serum amyloid A-3 protein (SAA3).